We begin with the raw amino-acid sequence, 216 residues long: Cell envelope integrity protein Cei (216 aa).

Residues 25 to 45 traverse the membrane as a helical segment; that stretch reads PAIVVVAFLVVVTCVMWTLAL.

It localises to the cell membrane. Functionally, contributes to cell envelope integrity and virulence. The polypeptide is Cell envelope integrity protein Cei (Mycobacterium tuberculosis (strain ATCC 25618 / H37Rv)).